A 473-amino-acid chain; its full sequence is Photosystem II CP43 reaction center protein (473 aa).

The propeptide occupies 1–14; sequence MKTLYSLRRFYHVE. Thr15 is subject to N-acetylthreonine. At Thr15 the chain carries Phosphothreonine. 5 helical membrane-spanning segments follow: residues 69–93, 134–155, 178–200, 255–275, and 291–312; these read LFEV…PHLA, LLGP…KDRN, KALY…RKIT, KPFA…LSYS, and WFNN…ASQA. Position 367 (Glu367) interacts with [CaMn4O5] cluster. Residues 447–471 traverse the membrane as a helical segment; it reads RARAAAAGFEKGIDRDFEPVLSMTP.

It belongs to the PsbB/PsbC family. PsbC subfamily. PSII is composed of 1 copy each of membrane proteins PsbA, PsbB, PsbC, PsbD, PsbE, PsbF, PsbH, PsbI, PsbJ, PsbK, PsbL, PsbM, PsbT, PsbX, PsbY, PsbZ, Psb30/Ycf12, at least 3 peripheral proteins of the oxygen-evolving complex and a large number of cofactors. It forms dimeric complexes. Binds multiple chlorophylls and provides some of the ligands for the Ca-4Mn-5O cluster of the oxygen-evolving complex. It may also provide a ligand for a Cl- that is required for oxygen evolution. PSII binds additional chlorophylls, carotenoids and specific lipids. serves as cofactor.

It localises to the plastid. The protein localises to the chloroplast thylakoid membrane. Its function is as follows. One of the components of the core complex of photosystem II (PSII). It binds chlorophyll and helps catalyze the primary light-induced photochemical processes of PSII. PSII is a light-driven water:plastoquinone oxidoreductase, using light energy to abstract electrons from H(2)O, generating O(2) and a proton gradient subsequently used for ATP formation. In Arabis hirsuta (Hairy rock-cress), this protein is Photosystem II CP43 reaction center protein.